Reading from the N-terminus, the 594-residue chain is Alpha-1,4-glucan:maltose-1-phosphate maltosyltransferase (594 aa).

The interval 244 to 270 (NRKGRNNSLTPGPDDPGSPYAIGSEEG) is disordered. Alpha-maltose 1-phosphate-binding residues include Lys246, Gln306, and Asp341. Asp377 serves as the catalytic Nucleophile. Asn378 is an alpha-maltose 1-phosphate binding site. The active-site Proton donor is Glu406. An alpha-maltose 1-phosphate-binding site is contributed by 517–518 (KY).

This sequence belongs to the glycosyl hydrolase 13 family. GlgE subfamily. As to quaternary structure, homodimer.

It carries out the reaction alpha-maltose 1-phosphate + [(1-&gt;4)-alpha-D-glucosyl](n) = [(1-&gt;4)-alpha-D-glucosyl](n+2) + phosphate. In terms of biological role, maltosyltransferase that uses maltose 1-phosphate (M1P) as the sugar donor to elongate linear or branched alpha-(1-&gt;4)-glucans. Is involved in a branched alpha-glucan biosynthetic pathway from trehalose, together with TreS, Mak and GlgB. This is Alpha-1,4-glucan:maltose-1-phosphate maltosyltransferase from Cereibacter sphaeroides (Rhodobacter sphaeroides).